Here is a 1193-residue protein sequence, read N- to C-terminus: Magnesium-chelatase subunit H (1193 aa).

This sequence belongs to the Mg-chelatase subunit H family.

The catalysed reaction is protoporphyrin IX + Mg(2+) + ATP + H2O = Mg-protoporphyrin IX + ADP + phosphate + 3 H(+). Its pathway is porphyrin-containing compound metabolism; bacteriochlorophyll biosynthesis (light-independent). In terms of biological role, involved in bacteriochlorophyll pigment biosynthesis; introduces a magnesium ion into protoporphyrin IX to yield Mg-protoroporphyrin IX. The protein is Magnesium-chelatase subunit H (bchH) of Cereibacter sphaeroides (strain ATCC 17023 / DSM 158 / JCM 6121 / CCUG 31486 / LMG 2827 / NBRC 12203 / NCIMB 8253 / ATH 2.4.1.) (Rhodobacter sphaeroides).